Reading from the N-terminus, the 194-residue chain is Protein GrpE (194 aa).

The interval 1-40 is disordered; it reads MSRKHHKEQEEIQEQETISAGAAETPAEETAAIPAATEAD. A compositionally biased stretch (low complexity) spans 20 to 38; sequence AGAAETPAEETAAIPAATE.

Belongs to the GrpE family. In terms of assembly, homodimer.

It localises to the cytoplasm. Functionally, participates actively in the response to hyperosmotic and heat shock by preventing the aggregation of stress-denatured proteins, in association with DnaK and GrpE. It is the nucleotide exchange factor for DnaK and may function as a thermosensor. Unfolded proteins bind initially to DnaJ; upon interaction with the DnaJ-bound protein, DnaK hydrolyzes its bound ATP, resulting in the formation of a stable complex. GrpE releases ADP from DnaK; ATP binding to DnaK triggers the release of the substrate protein, thus completing the reaction cycle. Several rounds of ATP-dependent interactions between DnaJ, DnaK and GrpE are required for fully efficient folding. The sequence is that of Protein GrpE from Chlorobaculum tepidum (strain ATCC 49652 / DSM 12025 / NBRC 103806 / TLS) (Chlorobium tepidum).